We begin with the raw amino-acid sequence, 519 residues long: Probable U3 small nucleolar RNA-associated protein 18 (519 aa).

9 WD repeats span residues D26 to T66, G71 to I111, S216 to V254, L259 to V298, N306 to S345, K347 to R386, Q390 to A429, N438 to N479, and T485 to D519.

It belongs to the WD repeat UTP18 family. Component of the ribosomal small subunit (SSU) processome.

Its subcellular location is the nucleus. It localises to the nucleolus. Functionally, involved in nucleolar processing of pre-18S ribosomal RNA. The polypeptide is Probable U3 small nucleolar RNA-associated protein 18 (Schizosaccharomyces pombe (strain 972 / ATCC 24843) (Fission yeast)).